Reading from the N-terminus, the 249-residue chain is 5'-nucleotidase SurE 2 (249 aa).

Asp-8, Asp-9, Ser-40, and Asn-90 together coordinate a divalent metal cation.

The protein belongs to the SurE nucleotidase family. A divalent metal cation is required as a cofactor.

Its subcellular location is the cytoplasm. The enzyme catalyses a ribonucleoside 5'-phosphate + H2O = a ribonucleoside + phosphate. Functionally, nucleotidase that shows phosphatase activity on nucleoside 5'-monophosphates. The protein is 5'-nucleotidase SurE 2 of Pyrobaculum aerophilum (strain ATCC 51768 / DSM 7523 / JCM 9630 / CIP 104966 / NBRC 100827 / IM2).